Here is a 121-residue protein sequence, read N- to C-terminus: Small ribosomal subunit protein uS13 (121 aa).

A disordered region spans residues 97–121 (VRGQRTRTNARTRRGARKTVAGRKK). Residues 100–121 (QRTRTNARTRRGARKTVAGRKK) show a composition bias toward basic residues.

This sequence belongs to the universal ribosomal protein uS13 family. Part of the 30S ribosomal subunit. Forms a loose heterodimer with protein S19. Forms two bridges to the 50S subunit in the 70S ribosome.

In terms of biological role, located at the top of the head of the 30S subunit, it contacts several helices of the 16S rRNA. In the 70S ribosome it contacts the 23S rRNA (bridge B1a) and protein L5 of the 50S subunit (bridge B1b), connecting the 2 subunits; these bridges are implicated in subunit movement. Contacts the tRNAs in the A and P-sites. This Prochlorococcus marinus (strain NATL2A) protein is Small ribosomal subunit protein uS13.